The following is a 393-amino-acid chain: DNA primase small subunit PriS (393 aa).

Active-site residues include D100, D102, and D296.

The protein belongs to the eukaryotic-type primase small subunit family. In terms of assembly, heterodimer of a small subunit (PriS) and a large subunit (PriL). Mg(2+) serves as cofactor. It depends on Mn(2+) as a cofactor.

Functionally, catalytic subunit of DNA primase, an RNA polymerase that catalyzes the synthesis of short RNA molecules used as primers for DNA polymerase during DNA replication. The small subunit contains the primase catalytic core and has DNA synthesis activity on its own. Binding to the large subunit stabilizes and modulates the activity, increasing the rate of DNA synthesis while decreasing the length of the DNA fragments, and conferring RNA synthesis capability. The DNA polymerase activity may enable DNA primase to also catalyze primer extension after primer synthesis. May also play a role in DNA repair. The sequence is that of DNA primase small subunit PriS from Natronomonas pharaonis (strain ATCC 35678 / DSM 2160 / CIP 103997 / JCM 8858 / NBRC 14720 / NCIMB 2260 / Gabara) (Halobacterium pharaonis).